The chain runs to 229 residues: NAD(P)H-quinone oxidoreductase subunit K, chloroplastic (229 aa).

Residues Cys-43, Cys-44, Cys-108, and Cys-139 each coordinate [4Fe-4S] cluster.

The protein belongs to the complex I 20 kDa subunit family. In terms of assembly, NDH is composed of at least 16 different subunits, 5 of which are encoded in the nucleus. [4Fe-4S] cluster is required as a cofactor.

The protein resides in the plastid. The protein localises to the chloroplast thylakoid membrane. The enzyme catalyses a plastoquinone + NADH + (n+1) H(+)(in) = a plastoquinol + NAD(+) + n H(+)(out). It carries out the reaction a plastoquinone + NADPH + (n+1) H(+)(in) = a plastoquinol + NADP(+) + n H(+)(out). In terms of biological role, NDH shuttles electrons from NAD(P)H:plastoquinone, via FMN and iron-sulfur (Fe-S) centers, to quinones in the photosynthetic chain and possibly in a chloroplast respiratory chain. The immediate electron acceptor for the enzyme in this species is believed to be plastoquinone. Couples the redox reaction to proton translocation, and thus conserves the redox energy in a proton gradient. In Aethionema grandiflorum (Persian stone-cress), this protein is NAD(P)H-quinone oxidoreductase subunit K, chloroplastic.